Consider the following 153-residue polypeptide: Large ribosomal subunit protein uL22 (153 aa).

Residues 110-153 form a disordered region; it reads ITVIVESRPPKQKGASAASARSRRAQGSKAAATKKSAETKEGSE. A compositionally biased stretch (basic and acidic residues) spans 144–153; that stretch reads KSAETKEGSE.

It belongs to the universal ribosomal protein uL22 family. Part of the 50S ribosomal subunit.

In terms of biological role, this protein binds specifically to 23S rRNA; its binding is stimulated by other ribosomal proteins, e.g. L4, L17, and L20. It is important during the early stages of 50S assembly. It makes multiple contacts with different domains of the 23S rRNA in the assembled 50S subunit and ribosome. Its function is as follows. The globular domain of the protein is located near the polypeptide exit tunnel on the outside of the subunit, while an extended beta-hairpin is found that lines the wall of the exit tunnel in the center of the 70S ribosome. The protein is Large ribosomal subunit protein uL22 of Mycolicibacterium smegmatis (strain ATCC 700084 / mc(2)155) (Mycobacterium smegmatis).